The following is a 186-amino-acid chain: Peptidyl-tRNA hydrolase (186 aa).

Tyrosine 14 serves as a coordination point for tRNA. The active-site Proton acceptor is histidine 19. Tyrosine 64, asparagine 66, and asparagine 112 together coordinate tRNA.

The protein belongs to the PTH family. Monomer.

Its subcellular location is the cytoplasm. It catalyses the reaction an N-acyl-L-alpha-aminoacyl-tRNA + H2O = an N-acyl-L-amino acid + a tRNA + H(+). In terms of biological role, hydrolyzes ribosome-free peptidyl-tRNAs (with 1 or more amino acids incorporated), which drop off the ribosome during protein synthesis, or as a result of ribosome stalling. Functionally, catalyzes the release of premature peptidyl moieties from peptidyl-tRNA molecules trapped in stalled 50S ribosomal subunits, and thus maintains levels of free tRNAs and 50S ribosomes. The sequence is that of Peptidyl-tRNA hydrolase from Bacillus cereus (strain Q1).